A 214-amino-acid chain; its full sequence is MRIILLGAPGAGKGTQANFIMNKFGIPQISTGDMLRAAIKAGTELGKQAKSVIDAGQLVSDEIILGLIKERIAQDDCEKGFLLDGFPRTIPQADGLKEMGIAVDYVVEFDVADDVIVERMAGRRAHLPSGRTYHNVYNPPKEEGKDDITGEELVVRDDDKEETVRARLGVYHDQTAPLISYYGKEAEAGNTKYLKFDGTKQVAEVSAELEKALA.

Gly-10–Thr-15 contacts ATP. The interval Ser-30–Val-59 is NMP. Residues Thr-31, Arg-36, Gln-57–Val-59, Gly-85–Arg-88, and Gln-92 each bind AMP. The interval Gly-122–Asp-159 is LID. ATP-binding positions include Arg-123 and Thr-132–Tyr-133. 2 residues coordinate AMP: Arg-156 and Arg-167. Lys-200 contributes to the ATP binding site.

This sequence belongs to the adenylate kinase family. In terms of assembly, monomer.

The protein localises to the cytoplasm. The enzyme catalyses AMP + ATP = 2 ADP. It participates in purine metabolism; AMP biosynthesis via salvage pathway; AMP from ADP: step 1/1. Functionally, catalyzes the reversible transfer of the terminal phosphate group between ATP and AMP. Plays an important role in cellular energy homeostasis and in adenine nucleotide metabolism. The protein is Adenylate kinase of Vibrio atlanticus (strain LGP32) (Vibrio splendidus (strain Mel32)).